We begin with the raw amino-acid sequence, 158 residues long: Protein-export protein SecB (158 aa).

Belongs to the SecB family. Homotetramer, a dimer of dimers. One homotetramer interacts with 1 SecA dimer.

Its subcellular location is the cytoplasm. Its function is as follows. One of the proteins required for the normal export of preproteins out of the cell cytoplasm. It is a molecular chaperone that binds to a subset of precursor proteins, maintaining them in a translocation-competent state. It also specifically binds to its receptor SecA. This is Protein-export protein SecB from Yersinia pestis (strain Pestoides F).